The primary structure comprises 929 residues: Isoleucine--tRNA ligase (929 aa).

Residues 58-68 (PYANGDIHIGH) carry the 'HIGH' region motif. Glu-563 contributes to the L-isoleucyl-5'-AMP binding site. The 'KMSKS' region motif lies at 605–609 (KMSKS). Residue Lys-608 participates in ATP binding. Zn(2+) is bound by residues Cys-892, Cys-895, Cys-912, and Cys-915.

The protein belongs to the class-I aminoacyl-tRNA synthetase family. IleS type 1 subfamily. Monomer. Requires Zn(2+) as cofactor.

It is found in the cytoplasm. The catalysed reaction is tRNA(Ile) + L-isoleucine + ATP = L-isoleucyl-tRNA(Ile) + AMP + diphosphate. Catalyzes the attachment of isoleucine to tRNA(Ile). As IleRS can inadvertently accommodate and process structurally similar amino acids such as valine, to avoid such errors it has two additional distinct tRNA(Ile)-dependent editing activities. One activity is designated as 'pretransfer' editing and involves the hydrolysis of activated Val-AMP. The other activity is designated 'posttransfer' editing and involves deacylation of mischarged Val-tRNA(Ile). This is Isoleucine--tRNA ligase from Neisseria meningitidis serogroup C / serotype 2a (strain ATCC 700532 / DSM 15464 / FAM18).